The sequence spans 207 residues: Large ribosomal subunit protein uL4 (207 aa).

The disordered stretch occupies residues 53–85 (ERSDVARTGKKFGRQKGGGTARHGDRKAPIFIG).

Belongs to the universal ribosomal protein uL4 family. In terms of assembly, part of the 50S ribosomal subunit.

In terms of biological role, one of the primary rRNA binding proteins, this protein initially binds near the 5'-end of the 23S rRNA. It is important during the early stages of 50S assembly. It makes multiple contacts with different domains of the 23S rRNA in the assembled 50S subunit and ribosome. Forms part of the polypeptide exit tunnel. This chain is Large ribosomal subunit protein uL4, found in Novosphingobium aromaticivorans (strain ATCC 700278 / DSM 12444 / CCUG 56034 / CIP 105152 / NBRC 16084 / F199).